A 389-amino-acid chain; its full sequence is Chalcone synthase 1 (389 aa).

The active site involves C164.

Belongs to the thiolase-like superfamily. Chalcone/stilbene synthases family.

The enzyme catalyses (E)-4-coumaroyl-CoA + 3 malonyl-CoA + 3 H(+) = 2',4,4',6'-tetrahydroxychalcone + 3 CO2 + 4 CoA. The protein operates within secondary metabolite biosynthesis; flavonoid biosynthesis. In terms of biological role, the primary product of this enzyme is 4,2',4',6'-tetrahydroxychalcone (also termed naringenin-chalcone or chalcone) which can under specific conditions spontaneously isomerize into naringenin. This chain is Chalcone synthase 1 (CHS1), found in Daucus carota (Wild carrot).